The primary structure comprises 297 residues: 2,3,4,5-tetrahydropyridine-2,6-dicarboxylate N-succinyltransferase (297 aa).

Positions 148 and 165 each coordinate Mg(2+). The active-site Acyl-anhydride intermediate is the E181. Residues R183, G198, S201, A224, 239–240, G247, K258, and 271–274 contribute to the succinyl-CoA site; these read EA and RRDS.

Belongs to the type 2 tetrahydrodipicolinate N-succinyltransferase family. As to quaternary structure, homotrimer.

The protein localises to the cytoplasm. It carries out the reaction (S)-2,3,4,5-tetrahydrodipicolinate + succinyl-CoA + H2O = (S)-2-succinylamino-6-oxoheptanedioate + CoA. The protein operates within amino-acid biosynthesis; L-lysine biosynthesis via DAP pathway; LL-2,6-diaminopimelate from (S)-tetrahydrodipicolinate (succinylase route): step 1/3. Its function is as follows. Catalyzes the conversion of the cyclic tetrahydrodipicolinate (THDP) into the acyclic N-succinyl-L-2-amino-6-oxopimelate using succinyl-CoA. In Corynebacterium glutamicum (strain ATCC 13032 / DSM 20300 / JCM 1318 / BCRC 11384 / CCUG 27702 / LMG 3730 / NBRC 12168 / NCIMB 10025 / NRRL B-2784 / 534), this protein is 2,3,4,5-tetrahydropyridine-2,6-dicarboxylate N-succinyltransferase.